The following is a 120-amino-acid chain: MSQEIAVIGSPAFTTGFQLAGVRKVENVADDEKDDDLDAAVEAVLADEDVGIAVMHDDDLAHLSRGVRQSVEASVEPTFVTIGGGASGASGLRDQIKRAIGIDLMDDDDDASAADTEAGD.

It belongs to the V-ATPase F subunit family. As to quaternary structure, has multiple subunits with at least A(3), B(3), C, D, E, F, H, I and proteolipid K(x).

Its subcellular location is the cell membrane. Component of the A-type ATP synthase that produces ATP from ADP in the presence of a proton gradient across the membrane. The protein is A-type ATP synthase subunit F of Halobacterium salinarum (strain ATCC 29341 / DSM 671 / R1).